The following is an 868-amino-acid chain: Ionotropic receptor 93a (868 aa).

The first 28 residues, 1 to 28, serve as a signal peptide directing secretion; that stretch reads MNPGEMRPSACLLLLAGLQLSILVPTEA. At 29 to 565 the chain is on the extracellular side; that stretch reads NDFSSFLSAN…ITRKPDEVSR (537 aa). Asn-38, Asn-205, Asn-294, Asn-305, Asn-432, Asn-475, Asn-499, and Asn-543 each carry an N-linked (GlcNAc...) asparagine glycan. Residues 566-586 traverse the membrane as a helical segment; sequence IYLFTAPFTVETWFCLMGIIL. Residues 587-642 lie on the Cytoplasmic side of the membrane; it reads LTAPTLYAINRLAPLKEMRIVGLSTVKSCFWYIFGALLQQGGMYLPTADSGRLVVG. A helical membrane pass occupies residues 643–663; the sequence is FWWIVVIVLVTTYCGNLVAFL. Residues 664 to 832 lie on the Extracellular side of the membrane; the sequence is TFPKFQPGVD…HKVNMDDMQG (169 aa). Asn-691 carries an N-linked (GlcNAc...) asparagine glycan. A helical membrane pass occupies residues 833 to 853; sequence CFLVLLLGFTLALLIVCGEFW. The Cytoplasmic portion of the chain corresponds to 854-868; the sequence is YRRFRASRKRRQFTN.

Belongs to the glutamate-gated ion channel (TC 1.A.10.1) family. In terms of tissue distribution, in the antenna, detected in sacculus neurons which innervate the first and second chambers (at protein level). Expressed in multiple cells of the larval dorsal organ ganglion, including the dorsal organ cool cells where it is predominately localized to the dendritic bulbs (at protein level).

The protein resides in the cell membrane. Functionally, integral part of various neural sensory systems in the antenna that provide the neural basis for the response to environmental changes in temperature (thermosensation) and humidity (hygrosensation). Together with Ir21a and Ir25a, mediates the response of the larval dorsal organ cool cells, a trio of cool-responsive neurons, to cooling and is required for cool avoidance behavior. Together with Ir25a and Ir40a, mediates the response of the hydrosensory sacculus neurons to changes in relative humidity, and is required for dry detection and humidiy preference behavior. The chain is Ionotropic receptor 93a from Drosophila melanogaster (Fruit fly).